The chain runs to 375 residues: Growth/differentiation factor 8 (375 aa).

A signal peptide spans 1 to 23; the sequence is MQKLAVYVYIYLFMQIAVDPVAL. The propeptide occupies 24–266; the sequence is DGSSQPTENA…VTDTPKRSRR (243 aa). The N-linked (GlcNAc...) asparagine glycan is linked to Asn-71. Intrachain disulfides connect Cys-272–Cys-282, Cys-281–Cys-340, Cys-309–Cys-372, and Cys-313–Cys-374.

It belongs to the TGF-beta family. As to quaternary structure, homodimer; disulfide-linked.

The protein localises to the secreted. Its function is as follows. Acts specifically as a negative regulator of skeletal muscle growth. The protein is Growth/differentiation factor 8 (MSTN) of Gallus gallus (Chicken).